Reading from the N-terminus, the 484-residue chain is Glycogen synthase (484 aa).

Lysine 21 is a binding site for ADP-alpha-D-glucose.

It belongs to the glycosyltransferase 1 family. Bacterial/plant glycogen synthase subfamily.

It catalyses the reaction [(1-&gt;4)-alpha-D-glucosyl](n) + ADP-alpha-D-glucose = [(1-&gt;4)-alpha-D-glucosyl](n+1) + ADP + H(+). The protein operates within glycan biosynthesis; glycogen biosynthesis. In terms of biological role, synthesizes alpha-1,4-glucan chains using ADP-glucose. This Pseudomonas syringae pv. tomato (strain ATCC BAA-871 / DC3000) protein is Glycogen synthase.